We begin with the raw amino-acid sequence, 453 residues long: GTPase Der (453 aa).

EngA-type G domains follow at residues 3–167 (FTLA…PAQT) and 187–360 (IKVA…AVWN). GTP is bound by residues 9–16 (GRPNVGKS), 56–60 (DTAGL), 119–122 (NKSE), 193–200 (GRPNAGKS), 240–244 (DTAGL), and 305–308 (NKSD). A KH-like domain is found at 361-445 (TRIPTNPLNR…PIRLTLREKG (85 aa)).

The protein belongs to the TRAFAC class TrmE-Era-EngA-EngB-Septin-like GTPase superfamily. EngA (Der) GTPase family. In terms of assembly, associates with the 50S ribosomal subunit.

Functionally, GTPase that plays an essential role in the late steps of ribosome biogenesis. The chain is GTPase Der from Azorhizobium caulinodans (strain ATCC 43989 / DSM 5975 / JCM 20966 / LMG 6465 / NBRC 14845 / NCIMB 13405 / ORS 571).